Consider the following 193-residue polypeptide: Acyl carrier protein phosphodiesterase (193 aa).

This sequence belongs to the AcpH family.

The catalysed reaction is holo-[ACP] + H2O = apo-[ACP] + (R)-4'-phosphopantetheine + H(+). Functionally, converts holo-ACP to apo-ACP by hydrolytic cleavage of the phosphopantetheine prosthetic group from ACP. The polypeptide is Acyl carrier protein phosphodiesterase (Serratia proteamaculans (strain 568)).